The following is a 191-amino-acid chain: Scytalone dehydratase PfmaJ (191 aa).

Substrate-binding residues include tyrosine 25, tyrosine 45, and phenylalanine 48. Active-site residues include histidine 80 and histidine 105. Asparagine 126 serves as a coordination point for substrate.

The protein belongs to the scytalone dehydratase family. As to quaternary structure, homotrimer. Each subunit contains an active site, located in the central part of the hydrophobic core of the monomer, which functions independently.

The protein localises to the endosome. The catalysed reaction is scytalone = 1,3,8-trihydroxynaphthalene + H2O. The protein operates within pigment biosynthesis; melanin biosynthesis. Its function is as follows. Scytalone dehydratase involved the biosynthesis of dihydroxynaphthalene (DHN)-melanin, a bluish-green pigment forming a dark layer in the conidial wall that protects the conidia from UV radiations. The first step of the pathway is the production of the pentaketide 1,3,6,8-tetrahydroxynaphthalene (1,3,6,8-THN or T4HN) by the polyketide synthase PfmaE though condensation of acetyl-CoA with malonyl-CoA. T4HN is not stable and easily oxidizes into the stable form flaviolin. T4HN is also substrate of the hydroxynaphthalene reductase PfmaG to yield scytalone. The scytalone dehydratase PfmaJ then reduces scytalone to 1,3,8-THN. 1,3,8-THN is then substrate of the hydroxynaphthalene reductase PfmaI to yield vermelone. Vermelone is further converted by the multicopper oxidase PfmaD to 1,8-DHN. Finally the laccase PFICI_06862 transforms 1,8-DHN to DHN-melanin. The roles of the 5-oxoprolinase PfmaA and the proline iminopeptidase PfmaB within the cluster have not been elucidated yet. The protein is Scytalone dehydratase PfmaJ of Pestalotiopsis fici (strain W106-1 / CGMCC3.15140).